An 82-amino-acid chain; its full sequence is Large ribosomal subunit protein bL31B (82 aa).

The protein belongs to the bacterial ribosomal protein bL31 family. Type B subfamily. In terms of assembly, part of the 50S ribosomal subunit.

The chain is Large ribosomal subunit protein bL31B from Amoebophilus asiaticus (strain 5a2).